The sequence spans 338 residues: Magnesium-chelatase subunit ChlI (338 aa).

Residue 11–18 (GDRGTGKS) coordinates ATP.

Belongs to the Mg-chelatase subunits D/I family.

The enzyme catalyses protoporphyrin IX + Mg(2+) + ATP + H2O = Mg-protoporphyrin IX + ADP + phosphate + 3 H(+). Its pathway is porphyrin-containing compound metabolism; chlorophyll biosynthesis. Its function is as follows. Involved in chlorophyll biosynthesis; introduces a magnesium ion into protoporphyrin IX to yield Mg-protoporphyrin IX. The polypeptide is Magnesium-chelatase subunit ChlI (chlI) (Anabaena variabilis).